The sequence spans 549 residues: Arginine--tRNA ligase (549 aa).

Positions 113-123 match the 'HIGH' region motif; that stretch reads ANPDGPLHIGH.

Belongs to the class-I aminoacyl-tRNA synthetase family.

It localises to the cytoplasm. The catalysed reaction is tRNA(Arg) + L-arginine + ATP = L-arginyl-tRNA(Arg) + AMP + diphosphate. This is Arginine--tRNA ligase (argS) from Archaeoglobus fulgidus (strain ATCC 49558 / DSM 4304 / JCM 9628 / NBRC 100126 / VC-16).